The primary structure comprises 82 residues: MSDLTSAASVLAAALAVGLAAIGPGIGQGTAAGQAVEGIARQPEAEGKIRGTLLLSLAFMEALTIYGLVVALVLLFANPFAG.

The next 2 membrane-spanning stretches (helical) occupy residues 7–27 (AASV…PGIG) and 57–77 (LAFM…LLFA).

It belongs to the ATPase C chain family. In terms of assembly, F-type ATPases have 2 components, F(1) - the catalytic core - and F(0) - the membrane proton channel. F(1) has five subunits: alpha(3), beta(3), gamma(1), delta(1), epsilon(1). F(0) has four main subunits: a(1), b(1), b'(1) and c(10-14). The alpha and beta chains form an alternating ring which encloses part of the gamma chain. F(1) is attached to F(0) by a central stalk formed by the gamma and epsilon chains, while a peripheral stalk is formed by the delta, b and b' chains.

The protein localises to the cellular thylakoid membrane. In terms of biological role, f(1)F(0) ATP synthase produces ATP from ADP in the presence of a proton or sodium gradient. F-type ATPases consist of two structural domains, F(1) containing the extramembraneous catalytic core and F(0) containing the membrane proton channel, linked together by a central stalk and a peripheral stalk. During catalysis, ATP synthesis in the catalytic domain of F(1) is coupled via a rotary mechanism of the central stalk subunits to proton translocation. Functionally, key component of the F(0) channel; it plays a direct role in translocation across the membrane. A homomeric c-ring of between 10-14 subunits forms the central stalk rotor element with the F(1) delta and epsilon subunits. This chain is ATP synthase subunit c, found in Synechococcus sp. (strain WH7803).